Consider the following 167-residue polypeptide: SsrA-binding protein (167 aa).

The disordered stretch occupies residues 137–167 (GKQSHDKRDAAKERDWQRDKQRVMRRHNRDA). The segment covering 139-158 (QSHDKRDAAKERDWQRDKQR) has biased composition (basic and acidic residues).

The protein belongs to the SmpB family.

It localises to the cytoplasm. Functionally, required for rescue of stalled ribosomes mediated by trans-translation. Binds to transfer-messenger RNA (tmRNA), required for stable association of tmRNA with ribosomes. tmRNA and SmpB together mimic tRNA shape, replacing the anticodon stem-loop with SmpB. tmRNA is encoded by the ssrA gene; the 2 termini fold to resemble tRNA(Ala) and it encodes a 'tag peptide', a short internal open reading frame. During trans-translation Ala-aminoacylated tmRNA acts like a tRNA, entering the A-site of stalled ribosomes, displacing the stalled mRNA. The ribosome then switches to translate the ORF on the tmRNA; the nascent peptide is terminated with the 'tag peptide' encoded by the tmRNA and targeted for degradation. The ribosome is freed to recommence translation, which seems to be the essential function of trans-translation. This is SsrA-binding protein from Xanthomonas campestris pv. campestris (strain 8004).